We begin with the raw amino-acid sequence, 64 residues long: Ferredoxin-like protein in nif region (64 aa).

One can recognise a 4Fe-4S ferredoxin-type domain in the interval 2–30 (AFKIIASQCTQCGACEFECPSGAISFKTD). [4Fe-4S] cluster contacts are provided by Cys-10, Cys-13, Cys-16, Cys-20, Cys-39, Cys-42, Cys-51, and Cys-55.

[4Fe-4S] cluster serves as cofactor.

The chain is Ferredoxin-like protein in nif region (fdxN) from Rhizobium leguminosarum bv. trifolii.